Here is a 753-residue protein sequence, read N- to C-terminus: Protein transport protein SEC23-1 (753 aa).

Residues Cys56, Cys61, Cys80, and Cys83 each contribute to the Zn(2+) site.

The protein belongs to the SEC23/SEC24 family. SEC23 subfamily. The COPII coat is composed of at least 5 proteins: the SEC23/24 complex, the SEC13/31 complex, and the protein SAR1.

The protein localises to the cytoplasm. It localises to the cytoplasmic vesicle. The protein resides in the COPII-coated vesicle membrane. Its subcellular location is the endoplasmic reticulum membrane. It is found in the golgi apparatus membrane. In terms of biological role, component of the coat protein complex II (COPII) which promotes the formation of transport vesicles from the endoplasmic reticulum (ER). The coat has two main functions, the physical deformation of the endoplasmic reticulum membrane into vesicles and the selection of cargo molecules. The polypeptide is Protein transport protein SEC23-1 (SEC231) (Candida glabrata (strain ATCC 2001 / BCRC 20586 / JCM 3761 / NBRC 0622 / NRRL Y-65 / CBS 138) (Yeast)).